Reading from the N-terminus, the 328-residue chain is Tetraacyldisaccharide 4'-kinase (328 aa).

55 to 62 (TAGGNGKT) is a binding site for ATP.

The protein belongs to the LpxK family.

It carries out the reaction a lipid A disaccharide + ATP = a lipid IVA + ADP + H(+). It functions in the pathway glycolipid biosynthesis; lipid IV(A) biosynthesis; lipid IV(A) from (3R)-3-hydroxytetradecanoyl-[acyl-carrier-protein] and UDP-N-acetyl-alpha-D-glucosamine: step 6/6. Its function is as follows. Transfers the gamma-phosphate of ATP to the 4'-position of a tetraacyldisaccharide 1-phosphate intermediate (termed DS-1-P) to form tetraacyldisaccharide 1,4'-bis-phosphate (lipid IVA). In Shigella dysenteriae serotype 1 (strain Sd197), this protein is Tetraacyldisaccharide 4'-kinase.